The following is a 206-amino-acid chain: Large ribosomal subunit protein uL3 (206 aa).

The segment at 126 to 155 is disordered; it reads HGHAGGPGAHGSRFHRHPGSMGANSTPSRV.

The protein belongs to the universal ribosomal protein uL3 family. As to quaternary structure, part of the 50S ribosomal subunit. Forms a cluster with proteins L14 and L19.

One of the primary rRNA binding proteins, it binds directly near the 3'-end of the 23S rRNA, where it nucleates assembly of the 50S subunit. In Leptospira interrogans serogroup Icterohaemorrhagiae serovar copenhageni (strain Fiocruz L1-130), this protein is Large ribosomal subunit protein uL3.